The following is a 199-amino-acid chain: Photosystem I reaction center subunit XI (199 aa).

Helical transmembrane passes span Ile108 to Leu128 and Phe165 to Leu185.

The protein belongs to the PsaL family.

The protein resides in the cellular thylakoid membrane. The protein is Photosystem I reaction center subunit XI of Prochlorococcus marinus (strain MIT 9515).